A 99-amino-acid chain; its full sequence is Large ribosomal subunit protein uL23 (99 aa).

Belongs to the universal ribosomal protein uL23 family. In terms of assembly, part of the 50S ribosomal subunit. Contacts protein L29, and trigger factor when it is bound to the ribosome.

One of the early assembly proteins it binds 23S rRNA. One of the proteins that surrounds the polypeptide exit tunnel on the outside of the ribosome. Forms the main docking site for trigger factor binding to the ribosome. The sequence is that of Large ribosomal subunit protein uL23 from Shewanella sediminis (strain HAW-EB3).